Here is a 402-residue protein sequence, read N- to C-terminus: Multidrug resistance protein MdtH (402 aa).

The Cytoplasmic portion of the chain corresponds to 1–12 (MSRVSQARNLGK). A helical membrane pass occupies residues 13-33 (YFLLIDNMLVVLGFFVVFPLI). Over 34-98 (SIRFVDQMGW…GFATMGIAHE (65 aa)) the chain is Periplasmic. Residues 99 to 116 (PWLLWFSCLLSGLGGTLF) form a helical membrane-spanning segment. Topologically, residues 117–138 (DPPRSALVVKLIRPQQRGRFFS) are cytoplasmic. Residues 139–159 (LLMMQDSAGAVIGALLGSWLL) form a helical membrane-spanning segment. Over 160 to 164 (QYDFR) the chain is Periplasmic. A helical transmembrane segment spans residues 165–185 (LVCATGAVLFVLCAAFNAWLL). The Cytoplasmic segment spans residues 186–213 (PAWKLSTVRTPVREGMTRVMRDKRFVTY). Residues 214–234 (VLTLAGYYMLAVQVMLMLPIM) traverse the membrane as a helical segment. Over 235–243 (VNDVAGAPS) the chain is Periplasmic. The helical transmembrane segment at 244–264 (AVKWMYAIEACLSLTLLYPIA) threads the bilayer. The Cytoplasmic portion of the chain corresponds to 265 to 276 (RWSEKHFRLEHR). The helical transmembrane segment at 277–297 (LMAGLLIMSLSMMPVGMVSGL) threads the bilayer. Residues 298-299 (QQ) lie on the Periplasmic side of the membrane. The helical transmembrane segment at 300–320 (LFTLICLFYIGSIIAEPARET) threads the bilayer. Residues 321 to 339 (LSASLADARARGSYMGFSR) lie on the Cytoplasmic side of the membrane. A helical membrane pass occupies residues 340–360 (LGLAIGGAIGYIGGGWLFDLG). Residues 361-367 (KSVHQPE) are Periplasmic-facing. The chain crosses the membrane as a helical span at residues 368 to 388 (LPWMMLGIIGIFTFLALGWQF). Topologically, residues 389–402 (SQKRAARRLLERDA) are cytoplasmic.

This sequence belongs to the major facilitator superfamily. DHA1 family. MdtH (TC 2.A.1.2.21) subfamily.

It localises to the cell inner membrane. Functionally, confers resistance to norfloxacin and enoxacin. The protein is Multidrug resistance protein MdtH of Escherichia coli O157:H7.